Consider the following 131-residue polypeptide: D-ribose pyranase (131 aa).

Histidine 20 (proton donor) is an active-site residue. Residues aspartate 28, histidine 98, and 120–122 (YSN) contribute to the substrate site.

This sequence belongs to the RbsD / FucU family. RbsD subfamily. Homodecamer.

It localises to the cytoplasm. It carries out the reaction beta-D-ribopyranose = beta-D-ribofuranose. It participates in carbohydrate metabolism; D-ribose degradation; D-ribose 5-phosphate from beta-D-ribopyranose: step 1/2. Catalyzes the interconversion of beta-pyran and beta-furan forms of D-ribose. The protein is D-ribose pyranase of Limosilactobacillus reuteri (strain DSM 20016) (Lactobacillus reuteri).